An 83-amino-acid chain; its full sequence is Bublin coiled-coil protein (83 aa).

The interval 1–25 (MSGPNGDLGTPVEAGAEGEEDGFGE) is disordered. Residues 25–74 (EAEYAAINSMLDQINSCLDHLEEKNDHLHARLQELLESNRQTRLEFQQQL) are a coiled coil. Ser82 is modified (phosphoserine).

The protein belongs to the UPF0184 (EST00098) family.

The protein resides in the cell junction. It is found in the cytoplasm. Its subcellular location is the cytoskeleton. Functionally, essential for intermediate filament organization in intestinal cells, interacts with intermediate filament and regulates intestinal lumen morphology. The protein is Bublin coiled-coil protein (BBLN) of Bos taurus (Bovine).